The following is a 275-amino-acid chain: Coagulation factor IX (275 aa).

At Y23 the chain carries Sulfotyrosine. An N-linked (GlcNAc...) asparagine glycan is attached at N25. Phosphothreonine is present on T27. An N-linked (GlcNAc...) asparagine glycan is attached at N35. O-linked (GalNAc...) threonine glycosylation occurs at T47. In terms of domain architecture, Peptidase S1 spans 49 to 275; it reads IVGGENAKPG…YTRVSWYVNW (227 aa). C74 and C90 are oxidised to a cystine. H89 (charge relay system) is an active-site residue. The N-linked (GlcNAc...) asparagine glycan is linked to N96. Ca(2+) is bound by residues E103, N105, E108, E110, and E113. Residue N128 is glycosylated (N-linked (GlcNAc...) asparagine). The Charge relay system role is filled by D137. 2 disulfides stabilise this stretch: C204–C218 and C229–C257. S233 functions as the Charge relay system in the catalytic mechanism.

It belongs to the peptidase S1 family. In terms of assembly, heterodimer of a light chain and a heavy chain; disulfide-linked. Interacts (inactive and activated) with F11 (activated) in calcium-dependent manner. Interacts with SERPINC1. Activated by factor XIa, which excises the activation peptide. The propeptide can also be removed by snake venom protease. Activated by coagulation factor VIIa-tissue factor (F7-F3) complex in calcium-dependent manner.

It is found in the secreted. It carries out the reaction Selective cleavage of Arg-|-Ile bond in factor X to form factor Xa.. Factor IX is a vitamin K-dependent plasma protein that participates in the intrinsic pathway of blood coagulation by converting factor X to its active form in the presence of Ca(2+) ions, phospholipids, and factor VIIIa. The protein is Coagulation factor IX (F9) of Oryctolagus cuniculus (Rabbit).